A 170-amino-acid chain; its full sequence is Der GTPase-activating protein YihI (170 aa).

2 disordered regions span residues 1–96 and 145–170; these read MKKP…LSPQ and LSYD…RGGN. Positions 20 to 30 are enriched in basic and acidic residues; the sequence is TREELNQEARD. Over residues 31–40 the composition is skewed to basic residues; that stretch reads RKRLKKHRGH. A compositionally biased stretch (acidic residues) spans 147–159; it reads YDDEEDEEEDEKQ.

The protein belongs to the YihI family. In terms of assembly, interacts with Der.

In terms of biological role, a GTPase-activating protein (GAP) that modifies Der/EngA GTPase function. May play a role in ribosome biogenesis. This chain is Der GTPase-activating protein YihI, found in Salmonella arizonae (strain ATCC BAA-731 / CDC346-86 / RSK2980).